A 160-amino-acid chain; its full sequence is Large ribosomal subunit protein uL13 (160 aa).

This sequence belongs to the universal ribosomal protein uL13 family. In terms of assembly, part of the 50S ribosomal subunit.

Functionally, this protein is one of the early assembly proteins of the 50S ribosomal subunit, although it is not seen to bind rRNA by itself. It is important during the early stages of 50S assembly. The polypeptide is Large ribosomal subunit protein uL13 (Orientia tsutsugamushi (strain Ikeda) (Rickettsia tsutsugamushi)).